The primary structure comprises 280 residues: UPF0276 protein NMB2142 (280 aa).

It belongs to the UPF0276 family.

This Neisseria meningitidis serogroup B (strain ATCC BAA-335 / MC58) protein is UPF0276 protein NMB2142.